Reading from the N-terminus, the 852-residue chain is Protein Shroom1 (852 aa).

Met1 carries the N-acetylmethionine modification. A Phosphoserine modification is found at Ser18. Disordered regions lie at residues 34–54 (SSFS…GTDL), 81–109 (TSPR…PLNR), and 125–218 (AAQA…ANQQ). Thr103 is modified (phosphothreonine). Residues 125 to 144 (AAQAAEPPSPPASRAAYRQR) show a composition bias toward low complexity. A phosphoserine mark is found at Ser133 and Ser137. An ASD1 domain is found at 145–233 (LQGAQRRVLR…SEPGKLDRVG (89 aa)). Residues 152 to 164 (VLRETSFQRKELR) are compositionally biased toward basic and acidic residues. 3 positions are modified to phosphoserine: Ser166, Ser190, and Ser224. Disordered stretches follow at residues 276–320 (LPET…GSGG), 399–431 (MRSP…QRTG), 464–496 (SRPT…TAAE), and 823–852 (DLGH…LLLT). Over residues 279–289 (TQPQGSMNLDS) the composition is skewed to polar residues. The span at 301–313 (ASRSRSASGEVLG) shows a compositional bias: low complexity. Residues 465–479 (RPTSHTPTGTANDNI) show a composition bias toward polar residues. The ASD2 domain occupies 543–825 (EELVQELARL…QLDAIRDDLG (283 aa)). Residues 830-852 (SPSPARPPGTCPPVQPPFPLLLT) are compositionally biased toward pro residues.

Belongs to the shroom family. Interacts with F-actin.

It is found in the cytoplasm. Its subcellular location is the cytoskeleton. Its function is as follows. May be involved in the assembly of microtubule arrays during cell elongation. In Homo sapiens (Human), this protein is Protein Shroom1 (SHROOM1).